A 36-amino-acid chain; its full sequence is Light-harvesting protein B-1015 gamma chain (36 aa).

Its function is as follows. One of the components of the bacteriochlorophyll-protein complex in the chromatophore membrane. In Blastochloris viridis (Rhodopseudomonas viridis), this protein is Light-harvesting protein B-1015 gamma chain.